A 393-amino-acid polypeptide reads, in one-letter code: Putative 8-amino-7-oxononanoate synthase (393 aa).

Arg23 is a substrate binding site. 110–111 (GY) serves as a coordination point for pyridoxal 5'-phosphate. His135 contributes to the substrate binding site. Pyridoxal 5'-phosphate is bound by residues Ser183, 208–211 (DEAH), and 239–242 (TLSK). N6-(pyridoxal phosphate)lysine is present on Lys242. Substrate is bound at residue Thr362.

This sequence belongs to the class-II pyridoxal-phosphate-dependent aminotransferase family. BioF subfamily. As to quaternary structure, homodimer. It depends on pyridoxal 5'-phosphate as a cofactor.

It catalyses the reaction 6-carboxyhexanoyl-[ACP] + L-alanine + H(+) = (8S)-8-amino-7-oxononanoate + holo-[ACP] + CO2. The protein operates within cofactor biosynthesis; biotin biosynthesis. In terms of biological role, catalyzes the decarboxylative condensation of pimeloyl-[acyl-carrier protein] and L-alanine to produce 8-amino-7-oxononanoate (AON), [acyl-carrier protein], and carbon dioxide. The protein is Putative 8-amino-7-oxononanoate synthase (bioF) of Trichodesmium erythraeum (strain IMS101).